Here is a 310-residue protein sequence, read N- to C-terminus: Collagen-like protein V6 (310 aa).

A compositionally biased stretch (polar residues) spans 1–41 (MSLSTLFSPNTYNINSKSQTLNNLPSNPTSQTNTLWSNNAY). A disordered region spans residues 1–183 (MSLSTLFSPN…GDPGAKGDPG (183 aa)). Collagen-like domains follow at residues 61-119 (GQKG…KGQA) and 123-182 (GLKG…KGDP). Over residues 92–101 (SGDKGDKGDS) the composition is skewed to basic and acidic residues. Asparagine 227 and asparagine 264 each carry an N-linked (GlcNAc...) asparagine; by host glycan.

The protein belongs to the sputnik virus V6 family.

In Sputnik virophage, this protein is Collagen-like protein V6.